A 608-amino-acid chain; its full sequence is Fatty acid amide hydrolase (608 aa).

Active-site charge relay system residues include K206 and S282. Substrate is bound at residue 303–306 (GGGS). The Acyl-ester intermediate role is filled by S306.

Belongs to the amidase family. As to quaternary structure, forms homodimers.

It is found in the endoplasmic reticulum membrane. Its subcellular location is the cell membrane. It catalyses the reaction N-(9Z,12Z-octadecadienoyl)-ethanolamine + H2O = ethanolamine + (9Z,12Z)-octadecadienoate. The enzyme catalyses N-hexadecanoylethanolamine + H2O = ethanolamine + hexadecanoate. The catalysed reaction is N-dodecanoylethanolamine + H2O = dodecanoate + ethanolamine. Its activity is regulated as follows. Inhibited by methyl arachidonyl fluorophosphonate (MAFP). Catalyzes the hydrolysis of bioactive endogenous fatty acid amides to their corresponding acids. The hydrolysis of endogenous amidated lipids terminates their participation as lipid mediators in various signaling systems. Converts a wide range of N-acylethanolamines (NAEs) to their corresponding free fatty acids and ethanolamine. In Oryza sativa subsp. indica (Rice), this protein is Fatty acid amide hydrolase.